Here is a 270-residue protein sequence, read N- to C-terminus: MSDQQQPPVYKIALGIEYDGSKYYGWQRQNEVRSVQEKLEKALSQVANEPITVFCAGRTDAGVHGTGQVVHFETTAQRKDAAWTLGVNANLPGDIAVRWVKAVPDDFHARFSATARRYRYIIYNHRLRPAVLSKGVTHFYEPLDAERMHRAAQCLLGENDFTSFRAVQCQSRTPWRNVMHINVTRHGPYVVVDIKANAFVHHMVRNIVGSLMEVGAHNQPESWIAELLAAKDRTLAAATAKAEGLYLVAVDYPDRYDLPKPPMGPLFLAD.

The active-site Nucleophile is D60. The interval 107–111 is RNA binding; the sequence is FHARF. Substrate is bound at residue Y118. The segment at 168–172 is interaction with tRNA; sequence QCQSR.

This sequence belongs to the tRNA pseudouridine synthase TruA family. In terms of assembly, homodimer.

The enzyme catalyses uridine(38/39/40) in tRNA = pseudouridine(38/39/40) in tRNA. Its function is as follows. Formation of pseudouridine at positions 38, 39 and 40 in the anticodon stem and loop of transfer RNAs. The chain is tRNA pseudouridine synthase A from Escherichia coli (strain 55989 / EAEC).